A 264-amino-acid polypeptide reads, in one-letter code: S-adenosylmethionine decarboxylase proenzyme (264 aa).

The active-site Schiff-base intermediate with substrate; via pyruvic acid is Ser112. Ser112 is modified (pyruvic acid (Ser); by autocatalysis). His117 functions as the Proton acceptor; for processing activity in the catalytic mechanism. Catalysis depends on Cys140, which acts as the Proton donor; for catalytic activity.

This sequence belongs to the prokaryotic AdoMetDC family. Type 2 subfamily. Heterooctamer of four alpha and four beta chains arranged as a tetramer of alpha/beta heterodimers. Requires pyruvate as cofactor. Post-translationally, is synthesized initially as an inactive proenzyme. Formation of the active enzyme involves a self-maturation process in which the active site pyruvoyl group is generated from an internal serine residue via an autocatalytic post-translational modification. Two non-identical subunits are generated from the proenzyme in this reaction, and the pyruvate is formed at the N-terminus of the alpha chain, which is derived from the carboxyl end of the proenzyme. The post-translation cleavage follows an unusual pathway, termed non-hydrolytic serinolysis, in which the side chain hydroxyl group of the serine supplies its oxygen atom to form the C-terminus of the beta chain, while the remainder of the serine residue undergoes an oxidative deamination to produce ammonia and the pyruvoyl group blocking the N-terminus of the alpha chain.

The catalysed reaction is S-adenosyl-L-methionine + H(+) = S-adenosyl 3-(methylsulfanyl)propylamine + CO2. The protein operates within amine and polyamine biosynthesis; S-adenosylmethioninamine biosynthesis; S-adenosylmethioninamine from S-adenosyl-L-methionine: step 1/1. Its function is as follows. Catalyzes the decarboxylation of S-adenosylmethionine to S-adenosylmethioninamine (dcAdoMet), the propylamine donor required for the synthesis of the polyamines spermine and spermidine from the diamine putrescine. This is S-adenosylmethionine decarboxylase proenzyme from Photorhabdus laumondii subsp. laumondii (strain DSM 15139 / CIP 105565 / TT01) (Photorhabdus luminescens subsp. laumondii).